The chain runs to 307 residues: Elongation factor Ts (307 aa).

Residues 79-82 are involved in Mg(2+) ion dislocation from EF-Tu; the sequence is TDFV.

It belongs to the EF-Ts family.

The protein localises to the cytoplasm. Functionally, associates with the EF-Tu.GDP complex and induces the exchange of GDP to GTP. It remains bound to the aminoacyl-tRNA.EF-Tu.GTP complex up to the GTP hydrolysis stage on the ribosome. This chain is Elongation factor Ts, found in Rhizobium meliloti (strain 1021) (Ensifer meliloti).